Consider the following 328-residue polypeptide: Cytochrome c biogenesis protein CcsA (328 aa).

A run of 8 helical transmembrane segments spans residues 13–33, 46–66, 73–93, 101–121, 146–166, 234–254, 263–283, and 295–315; these read ISFSVVSIVLIIYFLTLLVNL, GIIITFFGITGLLLTRWIFSG, LYESLIFLSWAFSIIHMVSYF, LNAITAPSAIFIQGFATSGLL, MILGYGALLCGSLLSIALLVI, IISLGFIFLTVGILSGAVWAN, WDPKETWAFITWTIFAIYLHI, and AIVASIGFLLIWICYFGVNLL.

This sequence belongs to the CcmF/CycK/Ccl1/NrfE/CcsA family. In terms of assembly, may interact with Ccs1.

It is found in the plastid. The protein localises to the chloroplast thylakoid membrane. In terms of biological role, required during biogenesis of c-type cytochromes (cytochrome c6 and cytochrome f) at the step of heme attachment. This chain is Cytochrome c biogenesis protein CcsA, found in Olimarabidopsis pumila (Dwarf rocket).